A 191-amino-acid chain; its full sequence is Leucyl/phenylalanyl-tRNA--protein transferase (191 aa).

It belongs to the L/F-transferase family.

The protein localises to the cytoplasm. It catalyses the reaction N-terminal L-lysyl-[protein] + L-leucyl-tRNA(Leu) = N-terminal L-leucyl-L-lysyl-[protein] + tRNA(Leu) + H(+). The catalysed reaction is N-terminal L-arginyl-[protein] + L-leucyl-tRNA(Leu) = N-terminal L-leucyl-L-arginyl-[protein] + tRNA(Leu) + H(+). It carries out the reaction L-phenylalanyl-tRNA(Phe) + an N-terminal L-alpha-aminoacyl-[protein] = an N-terminal L-phenylalanyl-L-alpha-aminoacyl-[protein] + tRNA(Phe). Its function is as follows. Functions in the N-end rule pathway of protein degradation where it conjugates Leu, Phe and, less efficiently, Met from aminoacyl-tRNAs to the N-termini of proteins containing an N-terminal arginine or lysine. In Gloeothece citriformis (strain PCC 7424) (Cyanothece sp. (strain PCC 7424)), this protein is Leucyl/phenylalanyl-tRNA--protein transferase.